We begin with the raw amino-acid sequence, 151 residues long: MPKIQIRILDSRLGNEIPLPHYATPGAAGLDLRACLDASLVLQPGETRLIPTGFAIHIGDPDLAAVLLPRSGLGHKHGIVLGNLVGLIDSDYQGQVLVSCWNRGPEPFEIAVGERIAQMVFVPVVQVSFEQVEAFAESRRAEGGFGHTGRH.

Residues 70 to 72, Asn-83, and 87 to 89 each bind substrate; these read RSG and LID.

Belongs to the dUTPase family. Mg(2+) serves as cofactor.

It catalyses the reaction dUTP + H2O = dUMP + diphosphate + H(+). It functions in the pathway pyrimidine metabolism; dUMP biosynthesis; dUMP from dCTP (dUTP route): step 2/2. This enzyme is involved in nucleotide metabolism: it produces dUMP, the immediate precursor of thymidine nucleotides and it decreases the intracellular concentration of dUTP so that uracil cannot be incorporated into DNA. The sequence is that of Deoxyuridine 5'-triphosphate nucleotidohydrolase from Methylococcus capsulatus (strain ATCC 33009 / NCIMB 11132 / Bath).